Consider the following 512-residue polypeptide: tRNA-2-methylthio-N(6)-dimethylallyladenosine synthase (512 aa).

The segment at 1 to 22 (MVAHDAAAGVTGEGAGPPVRRA) is disordered. One can recognise an MTTase N-terminal domain in the interval 25 to 141 (RTYQVRTYGC…LPTLLERARH (117 aa)). 6 residues coordinate [4Fe-4S] cluster: C34, C70, C104, C178, C182, and C185. Residues 164–400 (RESAYAAWVS…IALQEQISLE (237 aa)) enclose the Radical SAM core domain. The TRAM domain occupies 403-471 (RALVGQAVEV…PHHLIADAGV (69 aa)).

This sequence belongs to the methylthiotransferase family. MiaB subfamily. As to quaternary structure, monomer. It depends on [4Fe-4S] cluster as a cofactor.

It localises to the cytoplasm. It carries out the reaction N(6)-dimethylallyladenosine(37) in tRNA + (sulfur carrier)-SH + AH2 + 2 S-adenosyl-L-methionine = 2-methylsulfanyl-N(6)-dimethylallyladenosine(37) in tRNA + (sulfur carrier)-H + 5'-deoxyadenosine + L-methionine + A + S-adenosyl-L-homocysteine + 2 H(+). Its function is as follows. Catalyzes the methylthiolation of N6-(dimethylallyl)adenosine (i(6)A), leading to the formation of 2-methylthio-N6-(dimethylallyl)adenosine (ms(2)i(6)A) at position 37 in tRNAs that read codons beginning with uridine. This is tRNA-2-methylthio-N(6)-dimethylallyladenosine synthase from Mycobacterium bovis (strain ATCC BAA-935 / AF2122/97).